A 237-amino-acid polypeptide reads, in one-letter code: MQKQAELYRGKAKTVYSTENPDLLVLEFRNDTSAGDGARIEQFDRKGMLNNKFNYFIMSKLAEAGIPTQMERLLSDTECLVKKLDMVPVECVVRNRAAGSLVKRLGIEEGIELNPPLFDLFLKNDAMHDPMVNESYCETFGWVSKENLARMKELTYKANDVLKKLFDDAGLILVDFKLEFGLYKGEVVLGDEFSPDGSRLWDKETLEKMDKDRFRQSLGGLIEAYEAVARRLGVQLD.

It belongs to the SAICAR synthetase family.

The enzyme catalyses 5-amino-1-(5-phospho-D-ribosyl)imidazole-4-carboxylate + L-aspartate + ATP = (2S)-2-[5-amino-1-(5-phospho-beta-D-ribosyl)imidazole-4-carboxamido]succinate + ADP + phosphate + 2 H(+). It participates in purine metabolism; IMP biosynthesis via de novo pathway; 5-amino-1-(5-phospho-D-ribosyl)imidazole-4-carboxamide from 5-amino-1-(5-phospho-D-ribosyl)imidazole-4-carboxylate: step 1/2. The polypeptide is Phosphoribosylaminoimidazole-succinocarboxamide synthase (Shigella sonnei (strain Ss046)).